A 527-amino-acid chain; its full sequence is T-complex protein 1 subunit beta (527 aa).

It belongs to the TCP-1 chaperonin family. Heterooligomeric complex of about 850 to 900 kDa that forms two stacked rings, 12 to 16 nm in diameter.

It is found in the cytoplasm. Its function is as follows. Molecular chaperone; assists the folding of proteins upon ATP hydrolysis. Known to play a role, in vitro, in the folding of actin and tubulin. This chain is T-complex protein 1 subunit beta, found in Arabidopsis thaliana (Mouse-ear cress).